Reading from the N-terminus, the 505-residue chain is ATP synthase subunit alpha, chloroplastic (505 aa).

170 to 177 (GDRQTGKT) serves as a coordination point for ATP.

This sequence belongs to the ATPase alpha/beta chains family. F-type ATPases have 2 components, CF(1) - the catalytic core - and CF(0) - the membrane proton channel. CF(1) has five subunits: alpha(3), beta(3), gamma(1), delta(1), epsilon(1). CF(0) has four main subunits: a, b, b' and c.

The protein resides in the plastid. It localises to the chloroplast thylakoid membrane. The enzyme catalyses ATP + H2O + 4 H(+)(in) = ADP + phosphate + 5 H(+)(out). In terms of biological role, produces ATP from ADP in the presence of a proton gradient across the membrane. The alpha chain is a regulatory subunit. The sequence is that of ATP synthase subunit alpha, chloroplastic from Mesostigma viride (Green alga).